Consider the following 264-residue polypeptide: Non-homologous end-joining factor xrc4 (264 aa).

Basic and acidic residues predominate over residues 173–186 (RNNEDNEDNHHINY). Positions 173–264 (RNNEDNEDNH…SHESSETVSE (92 aa)) are disordered. Residues 200–209 (QEGVNSSAVS) are compositionally biased toward polar residues. The segment covering 248–264 (DDSHRRSSHESSETVSE) has biased composition (basic and acidic residues).

The protein belongs to the XRCC4-XLF family. XRCC4 subfamily. Interacts with lig4; the interaction is direct.

It localises to the nucleus. In terms of biological role, involved in double-strand break repair via non-homologous end joining (NHEJ); the repair of a double-strand break in DNA in which the two broken ends are rejoined with little or no sequence complementarity. This chain is Non-homologous end-joining factor xrc4, found in Schizosaccharomyces pombe (strain 972 / ATCC 24843) (Fission yeast).